We begin with the raw amino-acid sequence, 152 residues long: uncharacterized protein (152 aa).

Positions 1 to 16 are cleaved as a signal peptide; it reads MRKLLISLALAIPVFA. Residues 20-135 enclose the Cytochrome c domain; the sequence is NLLQKGYEVY…AVAYWLYHNY (116 aa). Residues Cys33, Cys36, and His37 each coordinate heme c.

This is an uncharacterized protein from Aquifex aeolicus (strain VF5).